The following is a 90-amino-acid chain: DNA-binding protein HU-1 (90 aa).

Phosphothreonine is present on T4.

Belongs to the bacterial histone-like protein family. As to quaternary structure, homodimer.

Its function is as follows. Histone-like DNA-binding protein which is capable of wrapping DNA to stabilize it, and thus to prevent its denaturation under extreme environmental conditions. The polypeptide is DNA-binding protein HU-1 (hup2) (Halalkalibacterium halodurans (strain ATCC BAA-125 / DSM 18197 / FERM 7344 / JCM 9153 / C-125) (Bacillus halodurans)).